A 177-amino-acid chain; its full sequence is 2-C-methyl-D-erythritol 2,4-cyclodiphosphate synthase (177 aa).

Positions 8 and 10 each coordinate a divalent metal cation. 4-CDP-2-C-methyl-D-erythritol 2-phosphate contacts are provided by residues 8-10 (DVH) and 34-35 (HS). Histidine 42 is an a divalent metal cation binding site. 4-CDP-2-C-methyl-D-erythritol 2-phosphate is bound by residues 56 to 58 (DIG), 61 to 65 (FPDTD), 132 to 135 (TTEE), phenylalanine 139, and arginine 142.

It belongs to the IspF family. Homotrimer. The cofactor is a divalent metal cation.

The enzyme catalyses 4-CDP-2-C-methyl-D-erythritol 2-phosphate = 2-C-methyl-D-erythritol 2,4-cyclic diphosphate + CMP. The protein operates within isoprenoid biosynthesis; isopentenyl diphosphate biosynthesis via DXP pathway; isopentenyl diphosphate from 1-deoxy-D-xylulose 5-phosphate: step 4/6. Its function is as follows. Involved in the biosynthesis of isopentenyl diphosphate (IPP) and dimethylallyl diphosphate (DMAPP), two major building blocks of isoprenoid compounds. Catalyzes the conversion of 4-diphosphocytidyl-2-C-methyl-D-erythritol 2-phosphate (CDP-ME2P) to 2-C-methyl-D-erythritol 2,4-cyclodiphosphate (ME-CPP) with a corresponding release of cytidine 5-monophosphate (CMP). The sequence is that of 2-C-methyl-D-erythritol 2,4-cyclodiphosphate synthase from Agathobacter rectalis (strain ATCC 33656 / DSM 3377 / JCM 17463 / KCTC 5835 / VPI 0990) (Eubacterium rectale).